The chain runs to 368 residues: Geranylgeranyl pyrophosphate synthase dpfgD (368 aa).

Isopentenyl diphosphate is bound by residues Lys48, Arg51, and His80. 2 residues coordinate Mg(2+): Asp87 and Asp91. Residue Arg96 participates in dimethylallyl diphosphate binding. Arg97 lines the isopentenyl diphosphate pocket. The dimethylallyl diphosphate site is built by Lys174, Thr175, and Gln208. Asp211 provides a ligand contact to Mg(2+). Residues Asn215, Lys225, and Lys235 each coordinate dimethylallyl diphosphate.

It belongs to the FPP/GGPP synthase family. It depends on Mg(2+) as a cofactor.

The catalysed reaction is isopentenyl diphosphate + dimethylallyl diphosphate = (2E)-geranyl diphosphate + diphosphate. It catalyses the reaction isopentenyl diphosphate + (2E)-geranyl diphosphate = (2E,6E)-farnesyl diphosphate + diphosphate. The enzyme catalyses isopentenyl diphosphate + (2E,6E)-farnesyl diphosphate = (2E,6E,10E)-geranylgeranyl diphosphate + diphosphate. Its pathway is secondary metabolite biosynthesis; terpenoid biosynthesis. In terms of biological role, geranylgeranyl pyrophosphate synthase; part of the gene cluster that mediates the biosynthesis of diterpenoid pyrones. The first step of the pathway is the synthesis of the alpha-pyrone moiety by the polyketide synthase dpfgA via condensation of one acetyl-CoA starter unit with 3 malonyl-CoA units and 2 methylations. The alpha-pyrone is then combined with geranylgeranyl pyrophosphate (GGPP) formed by the GGPP synthase dpfgD through the action of the prenyltransferase dpfgC to yield a linear alpha-pyrone diterpenoid. Subsequent steps in the diterpenoid pyrone biosynthetic pathway involve the decalin core formation, which is initiated by the epoxidation of the C10-C11 olefin by the FAD-dependent oxidoreductase dpfgE, and is followed by a cyclization cascade catalyzed by the terpene cyclase dpfgB. The short chain dehydrogenase/reductase dpfgG then oxidizes the 8S hydroxy group to a ketone and the short chain dehydrogenase/reductase dpfgH reduces the ketone to the 8R hydroxy group to yield higginsianin B. Higginsianin B is further methylated by the methyltransferase dpfgI to produce the intermediate named FDDP B. The cytochrome P450 monooxygenase dfgpJ then catalyzes a three-step oxidation at C-27 to generate a carboxylic acid as well as C-26 hydroxylation. Finally, methyltransferase dpfgK methylates the carboxylic acid generated by dpfgJ, yielding the final diterpenoid pyrones from the pathway which were named FDDP D and FDDP E. The chain is Geranylgeranyl pyrophosphate synthase dpfgD from Gibberella zeae (strain ATCC MYA-4620 / CBS 123657 / FGSC 9075 / NRRL 31084 / PH-1) (Wheat head blight fungus).